We begin with the raw amino-acid sequence, 206 residues long: MRPLTPRQAEILELIKRNIAETGMPPTRAEIATRLGFKSANAAEEHLKALAKKGCIEIMPGTSRGIRLPVEEEDNSETGLPLIGQVAAGEPILAQEHVEQYYQIDPSMFHPTANFLLRVKGDSMKNIGILEGDLLAVHKVQQARNGQVVVARVDDDVTVKRFEKKGNVVYLHAENEDYSPIKVDLSFQSLTIEGLAVGVIRNGDWL.

A DNA-binding region (H-T-H motif) is located at residues 28–48 (RAEIATRLGFKSANAAEEHLK). Residues serine 123 and lysine 160 each act as for autocatalytic cleavage activity in the active site.

The protein belongs to the peptidase S24 family. In terms of assembly, homodimer.

It catalyses the reaction Hydrolysis of Ala-|-Gly bond in repressor LexA.. Represses a number of genes involved in the response to DNA damage (SOS response), including recA and lexA. In the presence of single-stranded DNA, RecA interacts with LexA causing an autocatalytic cleavage which disrupts the DNA-binding part of LexA, leading to derepression of the SOS regulon and eventually DNA repair. This chain is LexA repressor, found in Shewanella oneidensis (strain ATCC 700550 / JCM 31522 / CIP 106686 / LMG 19005 / NCIMB 14063 / MR-1).